Consider the following 475-residue polypeptide: ATP synthase subunit beta 1 (475 aa).

Position 153 to 160 (153 to 160 (GGAGVGKT)) interacts with ATP.

It belongs to the ATPase alpha/beta chains family. F-type ATPases have 2 components, CF(1) - the catalytic core - and CF(0) - the membrane proton channel. CF(1) has five subunits: alpha(3), beta(3), gamma(1), delta(1), epsilon(1). CF(0) has three main subunits: a(1), b(2) and c(9-12). The alpha and beta chains form an alternating ring which encloses part of the gamma chain. CF(1) is attached to CF(0) by a central stalk formed by the gamma and epsilon chains, while a peripheral stalk is formed by the delta and b chains.

It localises to the cell membrane. It carries out the reaction ATP + H2O + 4 H(+)(in) = ADP + phosphate + 5 H(+)(out). Its function is as follows. Produces ATP from ADP in the presence of a proton gradient across the membrane. The catalytic sites are hosted primarily by the beta subunits. This chain is ATP synthase subunit beta 1, found in Mycoplasmopsis pulmonis (strain UAB CTIP) (Mycoplasma pulmonis).